A 342-amino-acid chain; its full sequence is Paired box protein Pax-9 (342 aa).

Positions 4–130 (AFGEVNQLGG…SSISRILRNK (127 aa)) form a DNA-binding region, paired. Residues 7 to 63 (EVNQLGGVFVNGRPLPNAIRLRIVELAQLGIRPCDISRQLRVSHGCVSKILARYNET) are PAI subdomain. Positions 82 to 130 (TVVKHIRTYKQRDPGIFAWEIRDRLLADGVCDKYNVPSVSSISRILRNK) are RED subdomain. Residues 168 to 189 (AAAAKVPTPPGVPAIPGSVALP) are interaction with KDM5B.

As to quaternary structure, interacts with KDM5B.

Its subcellular location is the nucleus. Its function is as follows. Transcription factor required for normal development of thymus, parathyroid glands, ultimobranchial bodies, teeth, skeletal elements of skull and larynx as well as distal limbs. The polypeptide is Paired box protein Pax-9 (Rattus norvegicus (Rat)).